The sequence spans 504 residues: Anaerobic nitric oxide reductase transcription regulator NorR (504 aa).

4-aspartylphosphate is present on D57. In terms of domain architecture, Sigma-54 factor interaction spans 187-416; it reads MIGLSPGMTQ…LEHAIHRAVV (230 aa). ATP is bound by residues 215 to 222 and 278 to 287; these read GETGTGKE and ADNGTLFLDE. Positions 479–498 form a DNA-binding region, H-T-H motif; it reads WAACARMLETDVANLHRLAK.

It participates in nitrogen metabolism; nitric oxide reduction. Required for the expression of anaerobic nitric oxide (NO) reductase, acts as a transcriptional activator for at least the norVW operon. Activation also requires sigma-54. This Escherichia coli (strain 55989 / EAEC) protein is Anaerobic nitric oxide reductase transcription regulator NorR.